A 223-amino-acid chain; its full sequence is Putative NAD(P)H nitroreductase SAB2397c (223 aa).

It belongs to the nitroreductase family. It depends on FMN as a cofactor.

The protein is Putative NAD(P)H nitroreductase SAB2397c of Staphylococcus aureus (strain bovine RF122 / ET3-1).